We begin with the raw amino-acid sequence, 142 residues long: Ribosome-binding factor A (142 aa).

The interval 119–142 is disordered; sequence EAKQKQHGVETDAEQGETKDEGDK.

The protein belongs to the RbfA family. Monomer. Binds 30S ribosomal subunits, but not 50S ribosomal subunits or 70S ribosomes.

It is found in the cytoplasm. In terms of biological role, one of several proteins that assist in the late maturation steps of the functional core of the 30S ribosomal subunit. Associates with free 30S ribosomal subunits (but not with 30S subunits that are part of 70S ribosomes or polysomes). Required for efficient processing of 16S rRNA. May interact with the 5'-terminal helix region of 16S rRNA. This chain is Ribosome-binding factor A, found in Shewanella halifaxensis (strain HAW-EB4).